The following is an 87-amino-acid chain: Kappa-2-bungarotoxin (87 aa).

Positions 1–21 (MKTLLLTLVVVTIVCLDLGYT) are cleaved as a signal peptide. Disulfide bonds link Cys-24–Cys-42, Cys-35–Cys-63, Cys-48–Cys-52, Cys-67–Cys-79, and Cys-80–Cys-85.

This sequence belongs to the three-finger toxin family. Long-chain subfamily. Kappa-neurotoxin sub-subfamily. Homodimer and heterodimer with kappa 3-bungarotoxin; non-covalently linked. In terms of tissue distribution, expressed by the venom gland.

It is found in the secreted. In terms of biological role, postsynaptic neurotoxin that binds and inhibits neuronal nicotinic acetylcholine receptors (nAChR) with high affinity (IC(50)&lt;100 nM). Is a selective, and slowly reversible antagonist of alpha-3/CHRNA3-containing and some alpha-4/CHRNA4-containing AChRs. This chain is Kappa-2-bungarotoxin, found in Bungarus multicinctus (Many-banded krait).